A 328-amino-acid polypeptide reads, in one-letter code: 4-hydroxythreonine-4-phosphate dehydrogenase (328 aa).

Substrate-binding residues include His-133 and Thr-134. His-163, His-208, and His-263 together coordinate a divalent metal cation. Residues Lys-271, Asn-280, and Arg-289 each coordinate substrate.

The protein belongs to the PdxA family. Homodimer. Requires Zn(2+) as cofactor. Mg(2+) serves as cofactor. The cofactor is Co(2+).

The protein resides in the cytoplasm. The catalysed reaction is 4-(phosphooxy)-L-threonine + NAD(+) = 3-amino-2-oxopropyl phosphate + CO2 + NADH. The protein operates within cofactor biosynthesis; pyridoxine 5'-phosphate biosynthesis; pyridoxine 5'-phosphate from D-erythrose 4-phosphate: step 4/5. In terms of biological role, catalyzes the NAD(P)-dependent oxidation of 4-(phosphooxy)-L-threonine (HTP) into 2-amino-3-oxo-4-(phosphooxy)butyric acid which spontaneously decarboxylates to form 3-amino-2-oxopropyl phosphate (AHAP). This is 4-hydroxythreonine-4-phosphate dehydrogenase from Chromobacterium violaceum (strain ATCC 12472 / DSM 30191 / JCM 1249 / CCUG 213 / NBRC 12614 / NCIMB 9131 / NCTC 9757 / MK).